The primary structure comprises 181 residues: Adenine phosphoribosyltransferase (181 aa).

The protein belongs to the purine/pyrimidine phosphoribosyltransferase family. Homodimer.

The protein resides in the cytoplasm. It carries out the reaction AMP + diphosphate = 5-phospho-alpha-D-ribose 1-diphosphate + adenine. Its pathway is purine metabolism; AMP biosynthesis via salvage pathway; AMP from adenine: step 1/1. Its function is as follows. Catalyzes a salvage reaction resulting in the formation of AMP, that is energically less costly than de novo synthesis. This chain is Adenine phosphoribosyltransferase, found in Brucella abortus (strain S19).